Consider the following 71-residue polypeptide: uncharacterized protein (71 aa).

Residues 20–32 (SSGRRQLTATQPR) are compositionally biased toward polar residues. A disordered region spans residues 20–46 (SSGRRQLTATQPRSDPESQRGRTSSNR).

This is an uncharacterized protein from Rhizobium leguminosarum.